The following is a 145-amino-acid chain: D-aminoacyl-tRNA deacylase (145 aa).

The Gly-cisPro motif, important for rejection of L-amino acids signature appears at 137–138; it reads GP.

It belongs to the DTD family. In terms of assembly, homodimer.

It is found in the cytoplasm. It catalyses the reaction glycyl-tRNA(Ala) + H2O = tRNA(Ala) + glycine + H(+). The enzyme catalyses a D-aminoacyl-tRNA + H2O = a tRNA + a D-alpha-amino acid + H(+). Its function is as follows. An aminoacyl-tRNA editing enzyme that deacylates mischarged D-aminoacyl-tRNAs. Also deacylates mischarged glycyl-tRNA(Ala), protecting cells against glycine mischarging by AlaRS. Acts via tRNA-based rather than protein-based catalysis; rejects L-amino acids rather than detecting D-amino acids in the active site. By recycling D-aminoacyl-tRNA to D-amino acids and free tRNA molecules, this enzyme counteracts the toxicity associated with the formation of D-aminoacyl-tRNA entities in vivo and helps enforce protein L-homochirality. This Salmonella typhimurium (strain LT2 / SGSC1412 / ATCC 700720) protein is D-aminoacyl-tRNA deacylase.